Here is a 454-residue protein sequence, read N- to C-terminus: Probable mitochondrial saccharopine dehydrogenase-like oxidoreductase At5g39410 (454 aa).

Methionine 1 carries the N-acetylmethionine modification. The segment at 215-234 (RRSRPRRPRPTICGPPAKGP) is disordered.

It belongs to the saccharopine dehydrogenase family.

It localises to the mitochondrion membrane. The chain is Probable mitochondrial saccharopine dehydrogenase-like oxidoreductase At5g39410 from Arabidopsis thaliana (Mouse-ear cress).